Reading from the N-terminus, the 70-residue chain is Large ribosomal subunit protein eL24 (70 aa).

Cysteine 6, cysteine 9, cysteine 32, and cysteine 36 together coordinate Zn(2+). Residues 6–36 (CSYCGRPIPPGYGIMYVRVDGVVLRFCSRRC) form a C4-type zinc finger.

This sequence belongs to the eukaryotic ribosomal protein eL24 family. In terms of assembly, part of the 50S ribosomal subunit. Forms a cluster with proteins L3 and L14. Zn(2+) serves as cofactor.

In terms of biological role, binds to the 23S rRNA. The sequence is that of Large ribosomal subunit protein eL24 from Caldivirga maquilingensis (strain ATCC 700844 / DSM 13496 / JCM 10307 / IC-167).